Here is a 378-residue protein sequence, read N- to C-terminus: Anhydro-N-acetylmuramic acid kinase (378 aa).

Position 23 to 30 (23 to 30 (GTSMDGAD)) interacts with ATP.

This sequence belongs to the anhydro-N-acetylmuramic acid kinase family.

The catalysed reaction is 1,6-anhydro-N-acetyl-beta-muramate + ATP + H2O = N-acetyl-D-muramate 6-phosphate + ADP + H(+). The protein operates within amino-sugar metabolism; 1,6-anhydro-N-acetylmuramate degradation. It participates in cell wall biogenesis; peptidoglycan recycling. In terms of biological role, catalyzes the specific phosphorylation of 1,6-anhydro-N-acetylmuramic acid (anhMurNAc) with the simultaneous cleavage of the 1,6-anhydro ring, generating MurNAc-6-P. Is required for the utilization of anhMurNAc either imported from the medium or derived from its own cell wall murein, and thus plays a role in cell wall recycling. The polypeptide is Anhydro-N-acetylmuramic acid kinase (Bordetella bronchiseptica (strain ATCC BAA-588 / NCTC 13252 / RB50) (Alcaligenes bronchisepticus)).